The sequence spans 186 residues: MAKAVWVHALVDVPEGVEVEVEGSKVKVRGPKGELERDFSHAKGIRIRVVEEEGKKQVLVETFFANRKRKALVNTVAAHIKNMITGVTKGWRYKMKIVFSHFPISVKVVGDRVEIHNFIGEKAPRVAKVLPGVTVKVQGRDVIIEGTDIEKVAQTAANIEQATKITEFDRRVFMDGIYIYAREVMS.

This sequence belongs to the universal ribosomal protein uL6 family. Part of the 50S ribosomal subunit.

This protein binds to the 23S rRNA, and is important in its secondary structure. It is located near the subunit interface in the base of the L7/L12 stalk, and near the tRNA binding site of the peptidyltransferase center. In Ignicoccus hospitalis (strain KIN4/I / DSM 18386 / JCM 14125), this protein is Large ribosomal subunit protein uL6.